A 396-amino-acid chain; its full sequence is Phosphoglycerate kinase (396 aa).

Substrate contacts are provided by residues 21-23 (DFN), Arg36, 59-62 (HLGK), Arg119, and Arg156. Residues Lys206, Gly294, Glu325, and 352–355 (GGDS) each bind ATP.

It belongs to the phosphoglycerate kinase family. As to quaternary structure, monomer.

The protein resides in the cytoplasm. The catalysed reaction is (2R)-3-phosphoglycerate + ATP = (2R)-3-phospho-glyceroyl phosphate + ADP. The protein operates within carbohydrate degradation; glycolysis; pyruvate from D-glyceraldehyde 3-phosphate: step 2/5. The polypeptide is Phosphoglycerate kinase (Listeria monocytogenes serotype 4b (strain CLIP80459)).